The sequence spans 157 residues: Protein Smg homolog (157 aa).

Belongs to the Smg family.

This Aliivibrio fischeri (strain MJ11) (Vibrio fischeri) protein is Protein Smg homolog.